We begin with the raw amino-acid sequence, 162 residues long: Iron-sulfur cluster assembly protein IscU (162 aa).

The protein belongs to the NifU family. In terms of assembly, homotrimer. Small proportion is monomeric. Interacts with IscS. Interacts with ABCB6. Component of a complex, at least composed of IscS, Isd11 and IscU. [4Fe-4S] cluster is required as a cofactor.

The protein localises to the mitochondrion. The protein operates within cofactor biosynthesis; iron-sulfur cluster biosynthesis. Functionally, participates in iron-sulfur cluster formation (ISC) pathway for iron-sulfur (Fe-S) cluster biogenesis. Plays a role of a major scaffold protein for [Fe-S] assembly; assembles [4Fe-4S] clusters directly upon interaction with the catalytic component IscS-Isd11 as part of the scaffold complex. Can transfer [4Fe-4S] clusters to target apo-proteins. The protein is Iron-sulfur cluster assembly protein IscU of Plasmodium falciparum (isolate 3D7).